A 396-amino-acid polypeptide reads, in one-letter code: L-lactate dehydrogenase (396 aa).

The region spanning 1 to 380 is the FMN hydroxy acid dehydrogenase domain; it reads MIISAASDYR…SRDSLVQELG (380 aa). Y24 contributes to the substrate binding site. S106 and Q127 together coordinate FMN. Residue Y129 participates in substrate binding. T155 contributes to the FMN binding site. R164 contacts substrate. K251 serves as a coordination point for FMN. H275 acts as the Proton acceptor in catalysis. Residue R278 coordinates substrate. Residue 306–330 participates in FMN binding; sequence DSGIRNGLDVVRMIALGADSVLLGR.

This sequence belongs to the FMN-dependent alpha-hydroxy acid dehydrogenase family. Requires FMN as cofactor.

The protein resides in the cell inner membrane. The enzyme catalyses (S)-lactate + A = pyruvate + AH2. Its function is as follows. Catalyzes the conversion of L-lactate to pyruvate. Is coupled to the respiratory chain. The protein is L-lactate dehydrogenase of Citrobacter koseri (strain ATCC BAA-895 / CDC 4225-83 / SGSC4696).